A 354-amino-acid chain; its full sequence is Uroporphyrinogen decarboxylase (354 aa).

Residues Arg27–Arg31, Asp77, Tyr154, Ser209, and His327 contribute to the substrate site.

This sequence belongs to the uroporphyrinogen decarboxylase family. Homodimer.

It is found in the cytoplasm. The enzyme catalyses uroporphyrinogen III + 4 H(+) = coproporphyrinogen III + 4 CO2. It participates in porphyrin-containing compound metabolism; protoporphyrin-IX biosynthesis; coproporphyrinogen-III from 5-aminolevulinate: step 4/4. Catalyzes the decarboxylation of four acetate groups of uroporphyrinogen-III to yield coproporphyrinogen-III. This chain is Uroporphyrinogen decarboxylase, found in Shewanella loihica (strain ATCC BAA-1088 / PV-4).